We begin with the raw amino-acid sequence, 254 residues long: Pyridoxine 5'-phosphate synthase (254 aa).

Asparagine 12 contributes to the 3-amino-2-oxopropyl phosphate binding site. 14–15 (DH) contacts 1-deoxy-D-xylulose 5-phosphate. A 3-amino-2-oxopropyl phosphate-binding site is contributed by arginine 23. Histidine 48 acts as the Proton acceptor in catalysis. 1-deoxy-D-xylulose 5-phosphate is bound by residues arginine 50 and histidine 55. Glutamate 75 functions as the Proton acceptor in the catalytic mechanism. A 1-deoxy-D-xylulose 5-phosphate-binding site is contributed by threonine 105. Residue histidine 199 is the Proton donor of the active site. Residues glycine 200 and 221–222 (GF) each bind 3-amino-2-oxopropyl phosphate.

The protein belongs to the PNP synthase family. Homooctamer; tetramer of dimers.

The protein resides in the cytoplasm. The catalysed reaction is 3-amino-2-oxopropyl phosphate + 1-deoxy-D-xylulose 5-phosphate = pyridoxine 5'-phosphate + phosphate + 2 H2O + H(+). Its pathway is cofactor biosynthesis; pyridoxine 5'-phosphate biosynthesis; pyridoxine 5'-phosphate from D-erythrose 4-phosphate: step 5/5. Catalyzes the complicated ring closure reaction between the two acyclic compounds 1-deoxy-D-xylulose-5-phosphate (DXP) and 3-amino-2-oxopropyl phosphate (1-amino-acetone-3-phosphate or AAP) to form pyridoxine 5'-phosphate (PNP) and inorganic phosphate. This is Pyridoxine 5'-phosphate synthase from Rhodopseudomonas palustris (strain ATCC BAA-98 / CGA009).